The chain runs to 109 residues: Ribonuclease P protein component 2 (109 aa).

The protein belongs to the eukaryotic/archaeal RNase P protein component 2 family. As to quaternary structure, consists of a catalytic RNA component and at least 4-5 protein subunits.

It is found in the cytoplasm. It catalyses the reaction Endonucleolytic cleavage of RNA, removing 5'-extranucleotides from tRNA precursor.. Its function is as follows. Part of ribonuclease P, a protein complex that generates mature tRNA molecules by cleaving their 5'-ends. The sequence is that of Ribonuclease P protein component 2 from Archaeoglobus fulgidus (strain ATCC 49558 / DSM 4304 / JCM 9628 / NBRC 100126 / VC-16).